Here is a 433-residue protein sequence, read N- to C-terminus: Probable mannan endo-1,4-beta-mannosidase F (433 aa).

The signal sequence occupies residues 1–19 (MKRQALTLIPLLGAAAAQS). One can recognise a CBM1 domain in the interval 20–53 (GPYGQCGGNDWSGATTCVSGYVCVYQNEWYSQCV). The thr-rich linker stretch occupies residues 56–82 (TATSSSTTLTTTTSATTRTTTTTTSTT). The tract at residues 83–433 (SVPSSTNFPS…TEHMERIAAR (351 aa)) is catalytic. N97 carries an N-linked (GlcNAc...) asparagine glycan. Substrate is bound by residues W142 and N255. Catalysis depends on E256, which acts as the Proton donor. Y331 provides a ligand contact to substrate. Residue E364 is the Nucleophile of the active site. W394 contacts substrate.

The protein belongs to the glycosyl hydrolase 5 (cellulase A) family.

It localises to the secreted. The enzyme catalyses Random hydrolysis of (1-&gt;4)-beta-D-mannosidic linkages in mannans, galactomannans and glucomannans.. Functionally, endo-1,4-mannanase, a crucial enzyme for depolymerization of seed galactomannans and wood galactoglucomannans. This Emericella nidulans (strain FGSC A4 / ATCC 38163 / CBS 112.46 / NRRL 194 / M139) (Aspergillus nidulans) protein is Probable mannan endo-1,4-beta-mannosidase F (manF).